The primary structure comprises 882 residues: Valine--tRNA ligase (882 aa).

Residues 45–55 (PNVTGKLHLGH) carry the 'HIGH' region motif. Positions 519 to 523 (KMSKS) match the 'KMSKS' region motif. An ATP-binding site is contributed by K522. Residues 808–882 (LADLLNVEEE…RIAEMKKIKS (75 aa)) adopt a coiled-coil conformation.

It belongs to the class-I aminoacyl-tRNA synthetase family. ValS type 1 subfamily. Monomer.

The protein resides in the cytoplasm. It catalyses the reaction tRNA(Val) + L-valine + ATP = L-valyl-tRNA(Val) + AMP + diphosphate. Catalyzes the attachment of valine to tRNA(Val). As ValRS can inadvertently accommodate and process structurally similar amino acids such as threonine, to avoid such errors, it has a 'posttransfer' editing activity that hydrolyzes mischarged Thr-tRNA(Val) in a tRNA-dependent manner. This is Valine--tRNA ligase from Streptococcus pyogenes serotype M28 (strain MGAS6180).